The primary structure comprises 310 residues: Vomeronasal type-1 receptor 101 (310 aa).

The Extracellular portion of the chain corresponds to 1–19 (MNKVNILPSDTNMKITLFS). A helical transmembrane segment spans residues 20–40 (ELSVGISANSILFFAHLCMFF). Over 41 to 49 (EENRSKPID) the chain is Cytoplasmic. The chain crosses the membrane as a helical span at residues 50–70 (LCIAFLSLTQLMLLVTMGLIA). At 71 to 93 (ADMFMAQGIWDITTCRSLIYFHR) the chain is on the extracellular side. Cys-85 and Cys-172 are joined by a disulfide. The chain crosses the membrane as a helical span at residues 94 to 114 (LLRGFNLCAACLLHILWTFTL). The Cytoplasmic portion of the chain corresponds to 115-134 (SPRSSCLTKFKHKSPHHISG). Residues 135 to 155 (AYLFFCVLYMSFSSHLFVLVI) form a helical membrane-spanning segment. Over 156 to 193 (ATSNLTSDHFMYVTQSCSLLPMSYSRTSTFSLLMVTRE) the chain is Extracellular. Asn-159 is a glycosylation site (N-linked (GlcNAc...) asparagine). Residues 194-214 (VFLISLMALSSGYMVTLLWRH) form a helical membrane-spanning segment. Residues 215–238 (KKQAQHLHSTRLSSKASPQQRATR) are Cytoplasmic-facing. A helical transmembrane segment spans residues 239 to 259 (TILLLMTFFVVFYILGTVIFH). Topologically, residues 260–268 (SRTKFKDGS) are extracellular. The helical transmembrane segment at 269–289 (IFYCVQIIVSHSYATISPFVF) threads the bilayer. Residues 290–310 (VFSEKRIIKFFRSMCGRIVNT) lie on the Cytoplasmic side of the membrane.

It belongs to the G-protein coupled receptor 1 family. Expressed in 1-4% of neurons of the vomeronasal organ. Only one pheromone receptor gene may be expressed in a particular neuron. Not expressed in the main olfactory epithelium.

Its subcellular location is the cell membrane. Functionally, putative pheromone receptor implicated in the regulation of social as well as reproductive behavior. This is Vomeronasal type-1 receptor 101 (Vom1r101) from Rattus norvegicus (Rat).